Consider the following 321-residue polypeptide: MSKQRVFIAGHRGMVGSAIRRQLEQRGDVELVLRTRDELNLLDSRAVHDFFASERIDQVYLAAAKVGGIVANNTYPADFIYQNMMIESNIIHAAHQNDVNKLLFLGSSCIYPKLAKQPMAESELLQGTLEPTNEPYAIAKIAGIKLCESYNRQYGRDYRSVMPTNLYGPHDNFHPSNSHVIPALLRRFHEATAQNAPDVVVWGSGTPMREFLHVDDMAAASIHVMELAHEVWLENTQPMLSHINVGTGVDCTIRELAQTIAKVVGYKGRVVFDASKPDGTPRKLLDVTRLHQLGWYHEISLEAGLASTYQWFLENQDRFRG.

NADP(+)-binding positions include 10-16 (GHRGMVG), 36-41 (RDELNL), and 105-108 (LGSS). Tyr136 (proton donor/acceptor) is an active-site residue. Residues Lys140, 163–166 (PTNL), and His179 each bind NADP(+). Substrate-binding residues include Arg187, Trp202, Arg209, and Asp278.

This sequence belongs to the NAD(P)-dependent epimerase/dehydratase family. Fucose synthase subfamily. Homodimer.

Its subcellular location is the cytoplasm. It carries out the reaction GDP-beta-L-fucose + NADP(+) = GDP-4-dehydro-alpha-D-rhamnose + NADPH + H(+). The protein operates within nucleotide-sugar biosynthesis; GDP-L-fucose biosynthesis via de novo pathway; GDP-L-fucose from GDP-alpha-D-mannose: step 2/2. It participates in exopolysaccharide biosynthesis; colanic acid biosynthesis. With respect to regulation, subject to product inhibition by NADP and GDP-fucose. Catalyzes the two-step NADP-dependent conversion of GDP-4-dehydro-6-deoxy-D-mannose to GDP-fucose, involving an epimerase and a reductase reaction. The protein is GDP-L-fucose synthase of Escherichia coli (strain K12).